Consider the following 548-residue polypeptide: Esterase-5A (548 aa).

The first 21 residues, 1–21 (MHLVRWLICLIQLWVQLGAAG), serve as a signal peptide directing secretion. A disulfide bridge links Cys-87 with Cys-106. Residues Asn-95 and Asn-116 are each glycosylated (N-linked (GlcNAc...) asparagine). Ser-210 functions as the Acyl-ester intermediate in the catalytic mechanism. Residues Cys-262 and Cys-274 are joined by a disulfide bond. Residue Asn-479 is glycosylated (N-linked (GlcNAc...) asparagine). Cys-518 and Cys-539 are disulfide-bonded.

The protein belongs to the type-B carboxylesterase/lipase family.

The protein localises to the secreted. It carries out the reaction a carboxylic ester + H2O = an alcohol + a carboxylate + H(+). This is Esterase-5A (Est-5A) from Drosophila pseudoobscura pseudoobscura (Fruit fly).